Here is a 697-residue protein sequence, read N- to C-terminus: PHD finger protein At2g01810 (697 aa).

Disordered stretches follow at residues 319–362 and 457–478; these read DENS…QYYS and EQKRKKKRKVKPQETSECTSTT. A compositionally biased stretch (basic and acidic residues) spans 339-349; sequence SGRDTVLDDHN. The segment at 635 to 685 adopts a PHD-type zinc-finger fold; the sequence is TVDCKCGARDDDGERMVACDACKVWHHTLCNSIEDDEAVPSVFLCNMCYGD.

The protein localises to the nucleus. This Arabidopsis thaliana (Mouse-ear cress) protein is PHD finger protein At2g01810.